The following is a 109-amino-acid chain: Small ribosomal subunit protein uS17 (109 aa).

Belongs to the universal ribosomal protein uS17 family. Part of the 30S ribosomal subunit.

Its function is as follows. One of the primary rRNA binding proteins, it binds specifically to the 5'-end of 16S ribosomal RNA. This chain is Small ribosomal subunit protein uS17, found in Methanococcoides burtonii (strain DSM 6242 / NBRC 107633 / OCM 468 / ACE-M).